We begin with the raw amino-acid sequence, 402 residues long: 1-deoxy-D-xylulose 5-phosphate reductoisomerase (402 aa).

Residues threonine 10, glycine 11, serine 12, isoleucine 13, glycine 36, arginine 37, asparagine 38, and asparagine 124 each contribute to the NADPH site. Lysine 125 lines the 1-deoxy-D-xylulose 5-phosphate pocket. Glutamate 126 lines the NADPH pocket. A Mn(2+)-binding site is contributed by aspartate 150. Residues serine 151, glutamate 152, serine 186, and histidine 209 each coordinate 1-deoxy-D-xylulose 5-phosphate. Glutamate 152 is a binding site for Mn(2+). Glycine 215 is a binding site for NADPH. 1-deoxy-D-xylulose 5-phosphate is bound by residues serine 222, asparagine 227, lysine 228, and glutamate 231. Glutamate 231 lines the Mn(2+) pocket.

Belongs to the DXR family. Mg(2+) is required as a cofactor. Requires Mn(2+) as cofactor.

It carries out the reaction 2-C-methyl-D-erythritol 4-phosphate + NADP(+) = 1-deoxy-D-xylulose 5-phosphate + NADPH + H(+). It participates in isoprenoid biosynthesis; isopentenyl diphosphate biosynthesis via DXP pathway; isopentenyl diphosphate from 1-deoxy-D-xylulose 5-phosphate: step 1/6. Its activity is regulated as follows. Inhibited by fosmidomycin. Catalyzes the NADPH-dependent rearrangement and reduction of 1-deoxy-D-xylulose-5-phosphate (DXP) to 2-C-methyl-D-erythritol 4-phosphate (MEP). The protein is 1-deoxy-D-xylulose 5-phosphate reductoisomerase of Synechococcus sp. (strain ATCC 27144 / PCC 6301 / SAUG 1402/1) (Anacystis nidulans).